Reading from the N-terminus, the 134-residue chain is Salivary protein 15 Iric-1 (134 aa).

An N-terminal signal peptide occupies residues 1–21; sequence MESFVAMKVVCITVLFVIVAV. The N-linked (GlcNAc...) asparagine glycan is linked to N22. Residues 48–67 form a required for Borrelia OspC-binding region; it reads PSYIRNPQKLALELLEICKN. 2 N-linked (GlcNAc...) asparagine glycosylation sites follow: N91 and N103. Residues 115–134 form a CD4-binding region; sequence GPNGETCAEKSKCVGHIPGC.

Belongs to the salp15 family. Monomer. Interacts with host CD4. Interacts with host DC-SIGN (CD209). In terms of assembly, (Microbial infection) Interacts with Borrelia outer surface protein C (OspC). In terms of tissue distribution, expressed in salivary glands. Detected in fed adult female.

It localises to the secreted. In terms of biological role, salivary tick protein that downregulates host immune system by binding to both dendritic cells, and CD4(+) T cells. Specifically binds to the CD4 coreceptor on T cells. This interaction prevents the activation of the Src kinase, Lck, and its downstream substrate Zap-70, and results in deficient activation of PLCgamma1, the repression of calcium fluxes triggered by T-cell antigen receptor (TCR) ligation, and a subsequent reduction in interleukin-2 production. This salivary protein also binds to DC-SIGN (CD209) on dendritic cells (DC) and activates the Raf-1 kinase/MEK signaling pathway that results in down-regulating expression of pro-inflammatory cytokines. Furthermore, it inhibits T cell proliferation induced by DCs. In addition, it inhibits in vitro keratinocyte inflammation induced by Borrelia burgdorferi or by the major outer surface protein (OspC) of Borrelia. In addition, it downregulates chemokines and monocyte chemoattractant protein 1, as well as several antimicrobial peptides such as defensins, cathelicidin, psoriasin, and RNase 7. Apart from its immunomodulatory activities, it is also associated with protection of Borrelia spirochetes from antibody-mediated killing through its binding to OspC. In vivo, tests on different immune disease animal models show promising therapeutic results, e.g., in inhibiting HIV infection, experimental autoimmune encephalomyelitis, transplantation rejection, and asthma. Functionally, (Microbial infection) Protects Borrelia garinii (strain VSBP) from host complement-mediated killing by binding to the surface of spirochetes and preventing deposition of host C5b-9 membrane attack complexes. Protects Borrelia garinii (strain A87S) from host complement-mediated killing. (Microbial infection) Partially protects Borrelia burgdorferi (strains VS215 and B31) from host complement-mediated killing. The polypeptide is Salivary protein 15 Iric-1 (Ixodes ricinus (Common tick)).